A 382-amino-acid polypeptide reads, in one-letter code: D-galactonate dehydratase (382 aa).

Residue aspartate 183 coordinates Mg(2+). Histidine 185 functions as the Proton donor in the catalytic mechanism. Glutamate 209 and glutamate 235 together coordinate Mg(2+). Histidine 285 acts as the Proton acceptor in catalysis.

This sequence belongs to the mandelate racemase/muconate lactonizing enzyme family. GalD subfamily. Requires Mg(2+) as cofactor.

It catalyses the reaction D-galactonate = 2-dehydro-3-deoxy-D-galactonate + H2O. It functions in the pathway carbohydrate acid metabolism; D-galactonate degradation; D-glyceraldehyde 3-phosphate and pyruvate from D-galactonate: step 1/3. Its function is as follows. Catalyzes the dehydration of D-galactonate to 2-keto-3-deoxy-D-galactonate. This chain is D-galactonate dehydratase, found in Salmonella choleraesuis (strain SC-B67).